We begin with the raw amino-acid sequence, 389 residues long: Phospho-N-acetylmuramoyl-pentapeptide-transferase (389 aa).

10 helical membrane passes run 25–45, 73–93, 97–117, 135–155, 190–210, 222–242, 258–278, 286–306, 311–331, and 366–386; these read RAVM…PWVI, TMGG…WGDL, FIWI…VDDY, FWQS…VSEA, ISYP…IVGA, GLVI…AYVM, GAGE…AFLW, VFMG…VAVI, IVLF…MLQV, and QVVV…LSTL.

This sequence belongs to the glycosyltransferase 4 family. MraY subfamily. It depends on Mg(2+) as a cofactor.

The protein resides in the cell inner membrane. The catalysed reaction is UDP-N-acetyl-alpha-D-muramoyl-L-alanyl-gamma-D-glutamyl-meso-2,6-diaminopimeloyl-D-alanyl-D-alanine + di-trans,octa-cis-undecaprenyl phosphate = di-trans,octa-cis-undecaprenyl diphospho-N-acetyl-alpha-D-muramoyl-L-alanyl-D-glutamyl-meso-2,6-diaminopimeloyl-D-alanyl-D-alanine + UMP. Its pathway is cell wall biogenesis; peptidoglycan biosynthesis. Functionally, catalyzes the initial step of the lipid cycle reactions in the biosynthesis of the cell wall peptidoglycan: transfers peptidoglycan precursor phospho-MurNAc-pentapeptide from UDP-MurNAc-pentapeptide onto the lipid carrier undecaprenyl phosphate, yielding undecaprenyl-pyrophosphoryl-MurNAc-pentapeptide, known as lipid I. This is Phospho-N-acetylmuramoyl-pentapeptide-transferase from Burkholderia ambifaria (strain ATCC BAA-244 / DSM 16087 / CCUG 44356 / LMG 19182 / AMMD) (Burkholderia cepacia (strain AMMD)).